A 413-amino-acid polypeptide reads, in one-letter code: Cardiolipin synthase B (413 aa).

2 consecutive PLD phosphodiesterase domains span residues 108–135 (IFRRMHRKIVVIDDRIAFVGGINYSAEH) and 285–312 (RRRPLHGKVALMDDHWATVGSSNLDPLS). Catalysis depends on residues histidine 113, lysine 115, aspartate 120, histidine 290, lysine 292, and aspartate 297. Residues 388 to 413 (AQVPPPAQPEMETQDRVDPENSGVKP) form a disordered region.

The protein belongs to the phospholipase D family. Cardiolipin synthase subfamily. ClsB sub-subfamily.

It localises to the cell membrane. The enzyme catalyses 2 a 1,2-diacyl-sn-glycero-3-phospho-(1'-sn-glycerol) = a cardiolipin + glycerol. Its function is as follows. Catalyzes the phosphatidyl group transfer from one phosphatidylglycerol molecule to another to form cardiolipin (CL) (diphosphatidylglycerol) and glycerol. The polypeptide is Cardiolipin synthase B (Salmonella typhi).